We begin with the raw amino-acid sequence, 379 residues long: Homoserine O-succinyltransferase (379 aa).

The 310-residue stretch at 51-360 (NAVLICHALS…DSPYGHDAFL (310 aa)) folds into the AB hydrolase-1 domain. Catalysis depends on serine 157, which acts as the Nucleophile. Arginine 227 serves as a coordination point for substrate. Catalysis depends on residues aspartate 323 and histidine 356. Aspartate 357 lines the substrate pocket.

The protein belongs to the AB hydrolase superfamily. MetX family. Homodimer.

It is found in the cytoplasm. It catalyses the reaction L-homoserine + succinyl-CoA = O-succinyl-L-homoserine + CoA. It functions in the pathway amino-acid biosynthesis; L-methionine biosynthesis via de novo pathway; O-succinyl-L-homoserine from L-homoserine: step 1/1. Functionally, transfers a succinyl group from succinyl-CoA to L-homoserine, forming succinyl-L-homoserine. This chain is Homoserine O-succinyltransferase, found in Pseudomonas entomophila (strain L48).